The chain runs to 210 residues: Small ribosomal subunit protein uS4 (210 aa).

One can recognise an S4 RNA-binding domain in the interval 100–160; it reads GRLDNVVYRM…EKSKNQLRVK (61 aa).

The protein belongs to the universal ribosomal protein uS4 family. As to quaternary structure, part of the 30S ribosomal subunit. Contacts protein S5. The interaction surface between S4 and S5 is involved in control of translational fidelity.

In terms of biological role, one of the primary rRNA binding proteins, it binds directly to 16S rRNA where it nucleates assembly of the body of the 30S subunit. Its function is as follows. With S5 and S12 plays an important role in translational accuracy. The polypeptide is Small ribosomal subunit protein uS4 (Alcanivorax borkumensis (strain ATCC 700651 / DSM 11573 / NCIMB 13689 / SK2)).